Here is a 343-residue protein sequence, read N- to C-terminus: Fanconi anemia group F protein (343 aa).

As to quaternary structure, belongs to the multisubunit FA complex composed of FANCA, FANCB, FANCC, FANCE, FANCF, FANCG, FANCL/PHF9 and FANCM. In complex with FANCA, FANCG and FANCL, but not with FANCC, nor FANCE, interacts with HES1; this interaction may be essential for the stability and nuclear localization of FA core complex proteins.

It is found in the nucleus. In terms of biological role, DNA repair protein that may operate in a postreplication repair or a cell cycle checkpoint function. May be implicated in interstrand DNA cross-link repair and in the maintenance of normal chromosome stability. The polypeptide is Fanconi anemia group F protein (Mus musculus (Mouse)).